Reading from the N-terminus, the 440-residue chain is R3H and coiled-coil domain-containing protein 1 (440 aa).

The R3H domain maps to 16-81 (NDFVHRIQEE…KRRTVICHQD (66 aa)). The tract at residues 154 to 225 (TSVLKREAPA…LGPESQSGKG (72 aa)) is disordered. Residues 157-168 (LKREAPAGRDPE) are compositionally biased toward basic and acidic residues. Phosphoserine is present on Ser-236. Residues 242–300 (LEKGKESLLEKRLVAEEEEDEEEVEEDGPSSCSEDDYSELLQEITDNLTKKEIQIEKIH) are a coiled coil. The tract at residues 254 to 276 (LVAEEEEDEEEVEEDGPSSCSED) is disordered. The span at 257–276 (EEEEDEEEVEEDGPSSCSED) shows a compositional bias: acidic residues.

This Homo sapiens (Human) protein is R3H and coiled-coil domain-containing protein 1.